Reading from the N-terminus, the 65-residue chain is UPF0434 protein HSM_0997 (65 aa).

This sequence belongs to the UPF0434 family.

This Histophilus somni (strain 2336) (Haemophilus somnus) protein is UPF0434 protein HSM_0997.